The sequence spans 612 residues: UBA domain-containing protein 6 (612 aa).

Positions 3-42 (DLDTKIKTLKNMGVSESDAKDSLERCGYDVESAAEFIFSG) constitute a UBA domain. S595 carries the phosphoserine modification.

The protein resides in the cytoplasm. Its subcellular location is the nucleus. This chain is UBA domain-containing protein 6 (ucp6), found in Schizosaccharomyces pombe (strain 972 / ATCC 24843) (Fission yeast).